The sequence spans 156 residues: Small ribosomal subunit protein uS7 (156 aa).

The protein belongs to the universal ribosomal protein uS7 family. Part of the 30S ribosomal subunit. Contacts proteins S9 and S11.

In terms of biological role, one of the primary rRNA binding proteins, it binds directly to 16S rRNA where it nucleates assembly of the head domain of the 30S subunit. Is located at the subunit interface close to the decoding center, probably blocks exit of the E-site tRNA. The polypeptide is Small ribosomal subunit protein uS7 (Bartonella henselae (strain ATCC 49882 / DSM 28221 / CCUG 30454 / Houston 1) (Rochalimaea henselae)).